We begin with the raw amino-acid sequence, 476 residues long: Protein transport protein Sec61 subunit alpha (476 aa).

Topologically, residues 2-33 (GIKFLEVIKPFCAVLPEIQKPERKIQFREKVL) are cytoplasmic. A helical membrane pass occupies residues 34–53 (WTAITLFIFLVCCQIPLFGI). Residues 54–76 (MSSDSADPFYWMRVILASNRGTL) lie on the Lumenal side of the membrane. The chain crosses the membrane as a helical span at residues 77 to 96 (MELGISPIVTSGLIMQLLAG). Residues 97–117 (AKIIEVGDTPKDRALFNGAQK) lie on the Cytoplasmic side of the membrane. The chain crosses the membrane as a helical span at residues 118-138 (LFGMIITIGQAIVYVMTGMYG). Topologically, residues 139 to 144 (DPSEMG) are lumenal. A helical transmembrane segment spans residues 145–165 (AGICLVIIIQLFVAGLIVLLL). Residues 166–172 (DELLQKG) are Cytoplasmic-facing. The helical transmembrane segment at 173-193 (YGLGSGISLFIATNICETIVW) threads the bilayer. Residues 194 to 240 (KAFSPTTVNTGRGTEFEGAIIALFHLLATRTDKVRALREAFYRQNLP) are Lumenal-facing. The chain crosses the membrane as a helical span at residues 241–261 (NLMNLIATVFVFAVVIYFQGF). Over 262–288 (RVDLPIKSARYRGQYNTYPIKLFYTSN) the chain is Cytoplasmic. Residues 289–309 (IPIILQSALVSNLYVISQMLS) traverse the membrane as a helical segment. Over 310 to 354 (TRFSGNFLVNLLGTWSDTSTGGPARAYPVGGLCYYFSPPESFGSV) the chain is Lumenal. A helical transmembrane segment spans residues 355–375 (LDDPVHASIYIVFMLGSCAFF). Over 376–420 (SKTWIEVSGSSAKDVAKQLKEQQMVMRGHRETSMVHELNRYIPTA) the chain is Cytoplasmic. The chain crosses the membrane as a helical span at residues 421 to 441 (AAFGGLCIGGLSVMADFLGAI). At 442 to 445 (GSGT) the chain is on the lumenal side. Residues 446 to 462 (GILLAVTIIYQYFEIFV) traverse the membrane as a helical segment. Over 463-476 (KEQSEMGSMGALLF) the chain is Cytoplasmic.

This sequence belongs to the SecY/SEC61-alpha family. The SEC61 channel-forming translocon complex consists of channel-forming core components SEC61A1, SEC61B and SEC61G and different auxiliary components such as SEC62 and SEC63. The SEC61 channel associates with the multi-pass translocon (MPT) complex.

The protein localises to the endoplasmic reticulum membrane. In terms of biological role, component of SEC61 channel-forming translocon complex that mediates transport of signal peptide-containing precursor polypeptides across the endoplasmic reticulum (ER). Forms a ribosome receptor and a gated pore in the ER membrane, both functions required for cotranslational translocation of nascent polypeptides. May cooperate with auxiliary protein SEC62, SEC63 and HSPA5/BiP to enable post-translational transport of small presecretory proteins. The SEC61 channel is also involved in ER membrane insertion of transmembrane proteins: it mediates membrane insertion of the first few transmembrane segments of proteins, while insertion of subsequent transmembrane regions of multi-pass membrane proteins is mediated by the multi-pass translocon (MPT) complex. This chain is Protein transport protein Sec61 subunit alpha (sec61a), found in Gadus ogac (Greenland cod).